Consider the following 252-residue polypeptide: Chitooligosaccharide deacetylase (252 aa).

Residues His61 and His125 each coordinate Mg(2+).

This sequence belongs to the YdjC deacetylase family. ChbG subfamily. Homodimer. It depends on Mg(2+) as a cofactor.

The protein resides in the cytoplasm. It catalyses the reaction N,N'-diacetylchitobiose + H2O = N-acetyl-beta-D-glucosaminyl-(1-&gt;4)-D-glucosamine + acetate. It carries out the reaction diacetylchitobiose-6'-phosphate + H2O = N'-monoacetylchitobiose-6'-phosphate + acetate. It participates in glycan degradation; chitin degradation. Its function is as follows. Involved in the degradation of chitin. ChbG is essential for growth on the acetylated chitooligosaccharides chitobiose and chitotriose but is dispensable for growth on cellobiose and chitosan dimer, the deacetylated form of chitobiose. Deacetylation of chitobiose-6-P and chitotriose-6-P is necessary for both the activation of the chb promoter by the regulatory protein ChbR and the hydrolysis of phosphorylated beta-glucosides by the phospho-beta-glucosidase ChbF. Catalyzes the removal of only one acetyl group from chitobiose-6-P to yield monoacetylchitobiose-6-P, the inducer of ChbR and the substrate of ChbF. In Escherichia coli O8 (strain IAI1), this protein is Chitooligosaccharide deacetylase.